Reading from the N-terminus, the 447-residue chain is Pup--protein ligase 2 (447 aa).

Glu4 serves as a coordination point for Mg(2+). Arg48 is a binding site for ATP. Residue Tyr50 coordinates Mg(2+). The active-site Proton acceptor is the Asp52. Residue Glu58 coordinates Mg(2+). ATP is bound by residues Thr61 and Trp414.

The protein belongs to the Pup ligase/Pup deamidase family. Pup-conjugating enzyme subfamily.

The catalysed reaction is ATP + [prokaryotic ubiquitin-like protein]-L-glutamate + [protein]-L-lysine = ADP + phosphate + N(6)-([prokaryotic ubiquitin-like protein]-gamma-L-glutamyl)-[protein]-L-lysine.. The protein operates within protein degradation; proteasomal Pup-dependent pathway. It participates in protein modification; protein pupylation. Functionally, catalyzes the covalent attachment of the prokaryotic ubiquitin-like protein modifier Pup to the proteasomal substrate proteins, thereby targeting them for proteasomal degradation. This tagging system is termed pupylation. The ligation reaction involves the side-chain carboxylate of the C-terminal glutamate of Pup and the side-chain amino group of a substrate lysine. The polypeptide is Pup--protein ligase 2 (Rhodococcus erythropolis (Arthrobacter picolinophilus)).